The sequence spans 515 residues: Maturase K (515 aa).

It belongs to the intron maturase 2 family. MatK subfamily.

It localises to the plastid. The protein resides in the chloroplast. Its function is as follows. Usually encoded in the trnK tRNA gene intron. Probably assists in splicing its own and other chloroplast group II introns. The protein is Maturase K of Pinus yunnanensis (Yunnan pine).